The chain runs to 469 residues: tRNA modification GTPase MnmE (469 aa).

3 residues coordinate (6S)-5-formyl-5,6,7,8-tetrahydrofolate: Arg-26, Glu-88, and Arg-127. In terms of domain architecture, TrmE-type G spans 222-390; it reads GLKVAIVGRP…LEDAILHLVQ (169 aa). Asn-232 lines the K(+) pocket. Residues 232–237, 251–257, 276–279, and 344–347 contribute to the GTP site; these read NVGKSS, TDLPGTT, DTAG, and NKAD. Residue Ser-236 participates in Mg(2+) binding. The K(+) site is built by Thr-251, Leu-253, and Thr-256. Thr-257 provides a ligand contact to Mg(2+). Residue Lys-469 participates in (6S)-5-formyl-5,6,7,8-tetrahydrofolate binding.

It belongs to the TRAFAC class TrmE-Era-EngA-EngB-Septin-like GTPase superfamily. TrmE GTPase family. As to quaternary structure, homodimer. Heterotetramer of two MnmE and two MnmG subunits. It depends on K(+) as a cofactor.

The protein resides in the cytoplasm. Functionally, exhibits a very high intrinsic GTPase hydrolysis rate. Involved in the addition of a carboxymethylaminomethyl (cmnm) group at the wobble position (U34) of certain tRNAs, forming tRNA-cmnm(5)s(2)U34. The chain is tRNA modification GTPase MnmE from Synechococcus elongatus.